Reading from the N-terminus, the 259-residue chain is Thiazole synthase (259 aa).

The active-site Schiff-base intermediate with DXP is Lys95. 1-deoxy-D-xylulose 5-phosphate contacts are provided by residues Gly156, Ala182–Gly183, and Asn204–Thr205.

Belongs to the ThiG family. Homotetramer. Forms heterodimers with either ThiH or ThiS.

The protein localises to the cytoplasm. The catalysed reaction is [ThiS sulfur-carrier protein]-C-terminal-Gly-aminoethanethioate + 2-iminoacetate + 1-deoxy-D-xylulose 5-phosphate = [ThiS sulfur-carrier protein]-C-terminal Gly-Gly + 2-[(2R,5Z)-2-carboxy-4-methylthiazol-5(2H)-ylidene]ethyl phosphate + 2 H2O + H(+). Its pathway is cofactor biosynthesis; thiamine diphosphate biosynthesis. Functionally, catalyzes the rearrangement of 1-deoxy-D-xylulose 5-phosphate (DXP) to produce the thiazole phosphate moiety of thiamine. Sulfur is provided by the thiocarboxylate moiety of the carrier protein ThiS. In vitro, sulfur can be provided by H(2)S. The protein is Thiazole synthase of Baumannia cicadellinicola subsp. Homalodisca coagulata.